The primary structure comprises 306 residues: MVAIIVHGGAGTIRKEERIPKIIEGVREAVLTGWRELKKGSALDAVEEAVKVLEDNPLFNAGTGSVLTLDGKVEMDAAIMRGKTLDAGAVAGIWGVKNPISVARKVMEKTDHVLLIGEGAVKFARLMGFPEYDPTTEERRKQWEELRKKLLETGEIRHWKKLSELIKEYPEVLRSTVGAVAFDGEEIVAGTSTGGVFLKMFGRVGDTPIIGAGTYANEVAGASCTGLGEVAIKLSLAKTATDFVRLGLDAQAASEAAIRLATKYFGPDTMGIIMVDSNGNVGFAKNTKHMSYAFMKEGMKEPEAGV.

Residue T176 is the Nucleophile of the active site. Residues 203-206 (RVGD) and 225-228 (TGLG) contribute to the substrate site.

Belongs to the Ntn-hydrolase family. Heterotetramer of two alpha and two beta chains arranged as a dimer of alpha/beta heterodimers. In terms of processing, autocleaved. Generates the alpha and beta subunits. The N-terminal residue of the beta subunit is thought to be responsible for the nucleophile hydrolase activity.

It carries out the reaction L-asparagine + H2O = L-aspartate + NH4(+). In terms of biological role, catalyzes the hydrolysis of L-asparagine into L-aspartate and ammonia. This chain is Plant-type L-asparaginase, found in Pyrococcus furiosus (strain ATCC 43587 / DSM 3638 / JCM 8422 / Vc1).